A 132-amino-acid polypeptide reads, in one-letter code: DNA-directed RNA polymerase subunit omega (132 aa).

Belongs to the RNA polymerase subunit omega family. The RNAP catalytic core consists of 2 alpha, 1 beta, 1 beta' and 1 omega subunit. When a sigma factor is associated with the core the holoenzyme is formed, which can initiate transcription.

It carries out the reaction RNA(n) + a ribonucleoside 5'-triphosphate = RNA(n+1) + diphosphate. Its function is as follows. Promotes RNA polymerase assembly. Latches the N- and C-terminal regions of the beta' subunit thereby facilitating its interaction with the beta and alpha subunits. In Bartonella quintana (strain Toulouse) (Rochalimaea quintana), this protein is DNA-directed RNA polymerase subunit omega.